The primary structure comprises 268 residues: Exodeoxyribonuclease III (268 aa).

Glutamate 34 serves as a coordination point for Mg(2+). Tyrosine 109 is a catalytic residue. Aspartate 151, asparagine 153, and aspartate 258 together coordinate Mg(2+). Aspartate 151 (proton donor/acceptor) is an active-site residue.

Belongs to the DNA repair enzymes AP/ExoA family. Monomer. Mg(2+) serves as cofactor. Requires Mn(2+) as cofactor.

The enzyme catalyses Exonucleolytic cleavage in the 3'- to 5'-direction to yield nucleoside 5'-phosphates.. Functionally, major apurinic-apyrimidinic endonuclease of E.coli. It removes the damaged DNA at cytosines and guanines by cleaving on the 3'-side of the AP site by a beta-elimination reaction. It exhibits 3'-5'-exonuclease, 3'-phosphomonoesterase, 3'-repair diesterase and ribonuclease H activities. The protein is Exodeoxyribonuclease III (xthA) of Salmonella typhi.